Consider the following 640-residue polypeptide: Probable potassium transport system protein Kup 1 (640 aa).

12 consecutive transmembrane segments (helical) span residues 25-45 (LVLAALGVVYGDLGTSPLYAL), 65-85 (VVSLFLWSLILMVSVKYVMVL), 115-135 (AVGWVLLGLAGAAMLYGDGVI), 153-173 (PALAAYVVPATVVILAMLFMI), 181-201 (VGAAFGPILAAWFVAIAALGL), 227-247 (GFAGFVSLGAVVLCLTGAEAL), 263-283 (WYGLALPALILSYLGQGALLL), 305-325 (MVALSTLATIVASQALITAVF), 353-373 (IYLPLLNWTLMLATIAVVLGF), 381-401 (AAFGLAVSTTMAITTVLFAVL), 410-430 (WWAVALVAGSLFAIDLAFWLA), and 438-458 (GGWLPLLLGLAVFCVMGCWFG).

The protein belongs to the HAK/KUP transporter (TC 2.A.72) family.

The protein resides in the cell inner membrane. It carries out the reaction K(+)(in) + H(+)(in) = K(+)(out) + H(+)(out). Transport of potassium into the cell. Likely operates as a K(+):H(+) symporter. The chain is Probable potassium transport system protein Kup 1 from Chromobacterium violaceum (strain ATCC 12472 / DSM 30191 / JCM 1249 / CCUG 213 / NBRC 12614 / NCIMB 9131 / NCTC 9757 / MK).